A 267-amino-acid polypeptide reads, in one-letter code: 2-keto-3-deoxy-L-rhamnonate aldolase (267 aa).

The active-site Proton acceptor is His-49. Gln-151 is a binding site for substrate. Glu-153 lines the Mg(2+) pocket. Substrate contacts are provided by Ala-178 and Asp-179. A Mg(2+)-binding site is contributed by Asp-179.

It belongs to the HpcH/HpaI aldolase family. KDR aldolase subfamily. As to quaternary structure, homohexamer. Mg(2+) serves as cofactor.

It catalyses the reaction 2-dehydro-3-deoxy-L-rhamnonate = (S)-lactaldehyde + pyruvate. Catalyzes the reversible retro-aldol cleavage of 2-keto-3-deoxy-L-rhamnonate (KDR) to pyruvate and lactaldehyde. The sequence is that of 2-keto-3-deoxy-L-rhamnonate aldolase from Salmonella agona (strain SL483).